The following is a 176-amino-acid chain: Cytochrome b (176 aa).

3 helical membrane passes run phenylalanine 33–methionine 53, tryptophan 77–isoleucine 98, and tryptophan 113–leucine 133. Heme b-binding residues include histidine 83 and histidine 97.

Belongs to the cytochrome b family. In terms of assembly, the cytochrome bc1 complex contains 11 subunits: 3 respiratory subunits (MT-CYB, CYC1 and UQCRFS1), 2 core proteins (UQCRC1 and UQCRC2) and 6 low-molecular weight proteins (UQCRH/QCR6, UQCRB/QCR7, UQCRQ/QCR8, UQCR10/QCR9, UQCR11/QCR10 and a cleavage product of UQCRFS1). This cytochrome bc1 complex then forms a dimer. Heme b serves as cofactor.

Its subcellular location is the mitochondrion inner membrane. Functionally, component of the ubiquinol-cytochrome c reductase complex (complex III or cytochrome b-c1 complex) that is part of the mitochondrial respiratory chain. The b-c1 complex mediates electron transfer from ubiquinol to cytochrome c. Contributes to the generation of a proton gradient across the mitochondrial membrane that is then used for ATP synthesis. This Eumops perotis (Western bonneted bat) protein is Cytochrome b (MT-CYB).